The chain runs to 734 residues: Photosystem I P700 chlorophyll a apoprotein A2 (734 aa).

8 helical membrane passes run 46 to 69 (IFASHFGQLAIIFLWTSGNLFHVA), 135 to 158 (LYTGALFLLFLSAISLIAGWLHLQ), 175 to 199 (LNHHLSGLFGVSSLAWTGHLVHVAI), 273 to 291 (MAHHHLAIAFIFLVAGHMY), 330 to 353 (LHFQLGLALASLGVITSLVAQHMY), 369 to 395 (AALYTHHQYIAGFIMTGAFAHGAIFFI), 417 to 439 (AIISHLSWASLFLGFHTLGLYVH), and 517 to 535 (FLVHHAIALGLHTTTLILV). [4Fe-4S] cluster-binding residues include cysteine 559 and cysteine 568. 2 helical membrane-spanning segments follow: residues 575-596 (AFYLAVFWMLNTIGWVTFYWHW) and 643-665 (LSVWAWMFLFGHLVWATGFMFLI). The chlorophyll a site is built by histidine 654, methionine 662, and tyrosine 670. Position 671 (tryptophan 671) interacts with phylloquinone. The helical transmembrane segment at 707 to 727 (LVGLAHFSVGYIFTYAAFLIA) threads the bilayer.

The protein belongs to the PsaA/PsaB family. In terms of assembly, the PsaA/B heterodimer binds the P700 chlorophyll special pair and subsequent electron acceptors. PSI consists of a core antenna complex that captures photons, and an electron transfer chain that converts photonic excitation into a charge separation. The eukaryotic PSI reaction center is composed of at least 11 subunits. P700 is a chlorophyll a/chlorophyll a' dimer, A0 is one or more chlorophyll a, A1 is one or both phylloquinones and FX is a shared 4Fe-4S iron-sulfur center. is required as a cofactor.

Its subcellular location is the plastid. It is found in the chloroplast thylakoid membrane. It carries out the reaction reduced [plastocyanin] + hnu + oxidized [2Fe-2S]-[ferredoxin] = oxidized [plastocyanin] + reduced [2Fe-2S]-[ferredoxin]. Its function is as follows. PsaA and PsaB bind P700, the primary electron donor of photosystem I (PSI), as well as the electron acceptors A0, A1 and FX. PSI is a plastocyanin-ferredoxin oxidoreductase, converting photonic excitation into a charge separation, which transfers an electron from the donor P700 chlorophyll pair to the spectroscopically characterized acceptors A0, A1, FX, FA and FB in turn. Oxidized P700 is reduced on the lumenal side of the thylakoid membrane by plastocyanin. This Solanum tuberosum (Potato) protein is Photosystem I P700 chlorophyll a apoprotein A2.